A 215-amino-acid chain; its full sequence is Large ribosomal subunit protein uL3 (215 aa).

A disordered region spans residues 136–161 (GVSISHRSHGSTGQRQDPGKVFKGKK). Glutamine 151 carries the N5-methylglutamine modification.

It belongs to the universal ribosomal protein uL3 family. As to quaternary structure, part of the 50S ribosomal subunit. Forms a cluster with proteins L14 and L19. In terms of processing, methylated by PrmB.

Functionally, one of the primary rRNA binding proteins, it binds directly near the 3'-end of the 23S rRNA, where it nucleates assembly of the 50S subunit. This chain is Large ribosomal subunit protein uL3, found in Rickettsia akari (strain Hartford).